The primary structure comprises 1025 residues: Beta-galactosidase (1025 aa).

The active-site Proton donor is Glu482. Glu551 acts as the Nucleophile in catalysis.

The protein belongs to the glycosyl hydrolase 2 family.

The enzyme catalyses Hydrolysis of terminal non-reducing beta-D-galactose residues in beta-D-galactosides.. The sequence is that of Beta-galactosidase (LAC4) from Kluyveromyces lactis (strain ATCC 8585 / CBS 2359 / DSM 70799 / NBRC 1267 / NRRL Y-1140 / WM37) (Yeast).